A 412-amino-acid chain; its full sequence is CCA-adding enzyme (412 aa).

Residues Ser-41 and Lys-44 each contribute to the ATP site. 2 residues coordinate CTP: Ser-41 and Lys-44. Positions 53, 55, and 106 each coordinate Mg(2+). Positions 129, 149, and 158 each coordinate ATP. CTP contacts are provided by His-129, Lys-149, and Tyr-158.

It belongs to the tRNA nucleotidyltransferase/poly(A) polymerase family. Archaeal CCA-adding enzyme subfamily. Homodimer. Mg(2+) is required as a cofactor.

It catalyses the reaction a tRNA precursor + 2 CTP + ATP = a tRNA with a 3' CCA end + 3 diphosphate. It carries out the reaction a tRNA with a 3' CCA end + 2 CTP + ATP = a tRNA with a 3' CCACCA end + 3 diphosphate. Functionally, catalyzes the addition and repair of the essential 3'-terminal CCA sequence in tRNAs without using a nucleic acid template. Adds these three nucleotides in the order of C, C, and A to the tRNA nucleotide-73, using CTP and ATP as substrates and producing inorganic pyrophosphate. tRNA 3'-terminal CCA addition is required both for tRNA processing and repair. Also involved in tRNA surveillance by mediating tandem CCA addition to generate a CCACCA at the 3' terminus of unstable tRNAs. While stable tRNAs receive only 3'-terminal CCA, unstable tRNAs are marked with CCACCA and rapidly degraded. The chain is CCA-adding enzyme from Saccharolobus islandicus (strain Y.N.15.51 / Yellowstone #2) (Sulfolobus islandicus).